The primary structure comprises 257 residues: Glutamate racemase (257 aa).

Substrate contacts are provided by residues 12–13 and 44–45; these read DS and YG. Residue cysteine 75 is the Proton donor/acceptor of the active site. 76 to 77 contacts substrate; sequence NT. Catalysis depends on cysteine 185, which acts as the Proton donor/acceptor. 186 to 187 provides a ligand contact to substrate; that stretch reads TH.

It belongs to the aspartate/glutamate racemases family.

It carries out the reaction L-glutamate = D-glutamate. Its pathway is cell wall biogenesis; peptidoglycan biosynthesis. Its function is as follows. Provides the (R)-glutamate required for cell wall biosynthesis. The chain is Glutamate racemase from Clostridium botulinum (strain Loch Maree / Type A3).